Reading from the N-terminus, the 610-residue chain is Probable indole-3-acetic acid-amido synthetase GH3.1 (610 aa).

The protein belongs to the IAA-amido conjugating enzyme family. In terms of tissue distribution, expressed in flowers.

In terms of biological role, may catalyze the synthesis of indole-3-acetic acid (IAA)-amino acid conjugates, providing a mechanism for the plant to cope with the presence of excess auxin. This is Probable indole-3-acetic acid-amido synthetase GH3.1 (GH3.1) from Oryza sativa subsp. japonica (Rice).